The following is a 193-amino-acid chain: Putative 3-methyladenine DNA glycosylase (193 aa).

It belongs to the DNA glycosylase MPG family.

The protein is Putative 3-methyladenine DNA glycosylase of Agrobacterium fabrum (strain C58 / ATCC 33970) (Agrobacterium tumefaciens (strain C58)).